A 295-amino-acid polypeptide reads, in one-letter code: 4-hydroxybenzoate octaprenyltransferase (295 aa).

Transmembrane regions (helical) follow at residues 28-48 (PIGI…AADG), 55-75 (VLIF…INDF), 103-123 (WALF…TDPF), 147-167 (LPQL…FTAA), 175-195 (AWLI…YYAM), 219-239 (AIIL…GMRL), 241-261 (LGPY…WEFV), and 275-295 (FLHN…DYGI).

It belongs to the UbiA prenyltransferase family. The cofactor is Mg(2+).

The protein resides in the cell inner membrane. The catalysed reaction is all-trans-octaprenyl diphosphate + 4-hydroxybenzoate = 4-hydroxy-3-(all-trans-octaprenyl)benzoate + diphosphate. Its pathway is cofactor biosynthesis; ubiquinone biosynthesis. Its function is as follows. Catalyzes the prenylation of para-hydroxybenzoate (PHB) with an all-trans polyprenyl group. Mediates the second step in the final reaction sequence of ubiquinone-8 (UQ-8) biosynthesis, which is the condensation of the polyisoprenoid side chain with PHB, generating the first membrane-bound Q intermediate 3-octaprenyl-4-hydroxybenzoate. This is 4-hydroxybenzoate octaprenyltransferase from Azotobacter vinelandii (strain DJ / ATCC BAA-1303).